The chain runs to 578 residues: Arginine--tRNA ligase (578 aa).

The 'HIGH' region signature appears at 123-133 (PNLAKEMHVGH).

The protein belongs to the class-I aminoacyl-tRNA synthetase family. In terms of assembly, monomer.

It localises to the cytoplasm. It carries out the reaction tRNA(Arg) + L-arginine + ATP = L-arginyl-tRNA(Arg) + AMP + diphosphate. The polypeptide is Arginine--tRNA ligase (Hahella chejuensis (strain KCTC 2396)).